The sequence spans 357 residues: Histidinol-phosphate aminotransferase 1 (357 aa).

An N6-(pyridoxal phosphate)lysine modification is found at Lys217.

This sequence belongs to the class-II pyridoxal-phosphate-dependent aminotransferase family. Histidinol-phosphate aminotransferase subfamily. Homodimer. The cofactor is pyridoxal 5'-phosphate.

It catalyses the reaction L-histidinol phosphate + 2-oxoglutarate = 3-(imidazol-4-yl)-2-oxopropyl phosphate + L-glutamate. Its pathway is amino-acid biosynthesis; L-histidine biosynthesis; L-histidine from 5-phospho-alpha-D-ribose 1-diphosphate: step 7/9. This is Histidinol-phosphate aminotransferase 1 from Burkholderia lata (strain ATCC 17760 / DSM 23089 / LMG 22485 / NCIMB 9086 / R18194 / 383).